Reading from the N-terminus, the 254-residue chain is Decaprenylphosphoryl-2-keto-beta-D-erythro-pentose reductase (254 aa).

NAD(+) is bound at residue D67. The Proton acceptor role is filled by Y160. K164 serves as a coordination point for NAD(+).

The protein belongs to the short-chain dehydrogenases/reductases (SDR) family. As to quaternary structure, interacts with DprE1 to form an epimerase complex.

It is found in the periplasm. It catalyses the reaction trans,octa-cis-decaprenylphospho-beta-D-arabinofuranose + NAD(+) = trans,octa-cis-decaprenylphospho-beta-D-erythro-pentofuranosid-2-ulose + NADH + H(+). It participates in cell wall biogenesis; cell wall polysaccharide biosynthesis. Component of the DprE1-DprE2 complex that catalyzes the 2-step epimerization of decaprenyl-phospho-ribose (DPR) to decaprenyl-phospho-arabinose (DPA), a key precursor that serves as the arabinose donor required for the synthesis of cell-wall arabinans. DprE1 catalyzes the first step of epimerization, namely FAD-dependent oxidation of the C2' hydroxyl of DPR to yield the keto intermediate decaprenyl-phospho-2'-keto-D-arabinose (DPX). The intermediate DPX is then transferred to DprE2 subunit of the epimerase complex, most probably through a 'substrate channel' at the interface of DprE1-DprE2 complex. DprE2 then catalyzes the second step of epimerization, the NAD(+)-dependent reduction of DPX that leads to the formation of DPA. This is Decaprenylphosphoryl-2-keto-beta-D-erythro-pentose reductase from Mycobacterium bovis (strain ATCC BAA-935 / AF2122/97).